Reading from the N-terminus, the 729-residue chain is Phosphoribosylformylglycinamidine synthase subunit PurL (729 aa).

Residue H42 is part of the active site. 2 residues coordinate ATP: Y45 and K84. Position 86 (E86) interacts with Mg(2+). Residues 87–90 (SHNH) and R109 each bind substrate. The active-site Proton acceptor is H88. D110 provides a ligand contact to Mg(2+). A substrate-binding site is contributed by Q238. D266 lines the Mg(2+) pocket. Substrate is bound at residue 310–312 (ESQ). ATP is bound by residues D492 and G529. A Mg(2+)-binding site is contributed by N530. Position 532 (S532) interacts with substrate.

It belongs to the FGAMS family. In terms of assembly, monomer. Part of the FGAM synthase complex composed of 1 PurL, 1 PurQ and 2 PurS subunits.

It localises to the cytoplasm. It carries out the reaction N(2)-formyl-N(1)-(5-phospho-beta-D-ribosyl)glycinamide + L-glutamine + ATP + H2O = 2-formamido-N(1)-(5-O-phospho-beta-D-ribosyl)acetamidine + L-glutamate + ADP + phosphate + H(+). The protein operates within purine metabolism; IMP biosynthesis via de novo pathway; 5-amino-1-(5-phospho-D-ribosyl)imidazole from N(2)-formyl-N(1)-(5-phospho-D-ribosyl)glycinamide: step 1/2. Part of the phosphoribosylformylglycinamidine synthase complex involved in the purines biosynthetic pathway. Catalyzes the ATP-dependent conversion of formylglycinamide ribonucleotide (FGAR) and glutamine to yield formylglycinamidine ribonucleotide (FGAM) and glutamate. The FGAM synthase complex is composed of three subunits. PurQ produces an ammonia molecule by converting glutamine to glutamate. PurL transfers the ammonia molecule to FGAR to form FGAM in an ATP-dependent manner. PurS interacts with PurQ and PurL and is thought to assist in the transfer of the ammonia molecule from PurQ to PurL. This is Phosphoribosylformylglycinamidine synthase subunit PurL from Campylobacter concisus (strain 13826).